Consider the following 314-residue polypeptide: MCVPSTPQPPVIGRFAPSPTGPLHVGSLVAAVASYAMARRQGGLWLVRMEDLDTPRVVPGMADDILRTLECLGFDWDGDIMRQSRRADAYGAALQRLLAAGHAYPCGCSRAEIARAATAPHDGDGEIPYPNLCRRGLPPGKEPRSFRVRVPAEPVEFTDLVMGPQHHDLPAMCGDFVIKRADGLFAYQLAVVVDDEAQGVTQVVRGADLLSSTPRQIVLQRLLGFDTPVYAHVPLVTGPGGGKLSKRDNALSLAAGRDLTREGGMLLLAALRFLGQSPPAELAGASGARVLRWAAGNFEPSAIPTAAAPFHASP.

L-glutamate-binding positions include 14-18 (RFAPS) and Glu-50. Positions 17 to 27 (PSPTGPLHVGS) match the 'HIGH' region motif. Zn(2+) contacts are provided by Cys-106, Cys-108, Tyr-129, and Cys-133. Tyr-187 and Arg-205 together coordinate L-glutamate. Positions 243–247 (KLSKR) match the 'KMSKS' region motif. Lys-246 lines the ATP pocket.

It belongs to the class-I aminoacyl-tRNA synthetase family. GluQ subfamily. Zn(2+) is required as a cofactor.

Its function is as follows. Catalyzes the tRNA-independent activation of glutamate in presence of ATP and the subsequent transfer of glutamate onto a tRNA(Asp). Glutamate is transferred on the 2-amino-5-(4,5-dihydroxy-2-cyclopenten-1-yl) moiety of the queuosine in the wobble position of the QUC anticodon. This Geobacter sulfurreducens (strain ATCC 51573 / DSM 12127 / PCA) protein is Glutamyl-Q tRNA(Asp) synthetase.